Reading from the N-terminus, the 520-residue chain is Glutamate--cysteine ligase (520 aa).

This sequence belongs to the glutamate--cysteine ligase type 1 family. Type 1 subfamily.

The catalysed reaction is L-cysteine + L-glutamate + ATP = gamma-L-glutamyl-L-cysteine + ADP + phosphate + H(+). It participates in sulfur metabolism; glutathione biosynthesis; glutathione from L-cysteine and L-glutamate: step 1/2. In Serratia proteamaculans (strain 568), this protein is Glutamate--cysteine ligase.